The following is a 50-amino-acid chain: Large ribosomal subunit protein bL33B (50 aa).

Belongs to the bacterial ribosomal protein bL33 family.

This is Large ribosomal subunit protein bL33B from Streptococcus pyogenes serotype M1.